The following is a 554-amino-acid chain: Chaperonin GroEL (554 aa).

Residues 29–32 (TLGP), Lys50, 86–90 (DGTTT), Gly418, and Asp499 contribute to the ATP site. Residues 528-554 (HEEDNNTNRSGGGVGGGHHGGMGGMDF) are disordered. A compositionally biased stretch (gly residues) spans 537 to 554 (SGGGVGGGHHGGMGGMDF).

This sequence belongs to the chaperonin (HSP60) family. As to quaternary structure, forms a cylinder of 14 subunits composed of two heptameric rings stacked back-to-back. Interacts with the co-chaperonin GroES.

The protein localises to the cytoplasm. It carries out the reaction ATP + H2O + a folded polypeptide = ADP + phosphate + an unfolded polypeptide.. Its function is as follows. Together with its co-chaperonin GroES, plays an essential role in assisting protein folding. The GroEL-GroES system forms a nano-cage that allows encapsulation of the non-native substrate proteins and provides a physical environment optimized to promote and accelerate protein folding. This Orientia tsutsugamushi (strain Boryong) (Rickettsia tsutsugamushi) protein is Chaperonin GroEL.